A 634-amino-acid polypeptide reads, in one-letter code: Threonine--tRNA ligase (634 aa).

The TGS domain occupies 1–61; sequence MINIRFPDGS…NSNCELRLIT (61 aa). A catalytic region spans residues 241 to 532; sequence DHRKIGKVLD…LIEHYAGNLP (292 aa). Cys-332, His-383, and His-509 together coordinate Zn(2+).

It belongs to the class-II aminoacyl-tRNA synthetase family. In terms of assembly, homodimer. Zn(2+) serves as cofactor.

The protein resides in the cytoplasm. It catalyses the reaction tRNA(Thr) + L-threonine + ATP = L-threonyl-tRNA(Thr) + AMP + diphosphate + H(+). In terms of biological role, catalyzes the attachment of threonine to tRNA(Thr) in a two-step reaction: L-threonine is first activated by ATP to form Thr-AMP and then transferred to the acceptor end of tRNA(Thr). Also edits incorrectly charged L-seryl-tRNA(Thr). The protein is Threonine--tRNA ligase of Francisella tularensis subsp. tularensis (strain WY96-3418).